Here is a 120-residue protein sequence, read N- to C-terminus: Phosphoribosyl-AMP cyclohydrolase (120 aa).

Residue Asp-75 participates in Mg(2+) binding. Position 76 (Cys-76) interacts with Zn(2+). Mg(2+)-binding residues include Asp-77 and Asp-79. 2 residues coordinate Zn(2+): Cys-92 and Cys-99.

Belongs to the PRA-CH family. As to quaternary structure, homodimer. Mg(2+) serves as cofactor. Zn(2+) is required as a cofactor.

Its subcellular location is the cytoplasm. The catalysed reaction is 1-(5-phospho-beta-D-ribosyl)-5'-AMP + H2O = 1-(5-phospho-beta-D-ribosyl)-5-[(5-phospho-beta-D-ribosylamino)methylideneamino]imidazole-4-carboxamide. It participates in amino-acid biosynthesis; L-histidine biosynthesis; L-histidine from 5-phospho-alpha-D-ribose 1-diphosphate: step 3/9. Catalyzes the hydrolysis of the adenine ring of phosphoribosyl-AMP. This chain is Phosphoribosyl-AMP cyclohydrolase, found in Haloarcula marismortui (strain ATCC 43049 / DSM 3752 / JCM 8966 / VKM B-1809) (Halobacterium marismortui).